The primary structure comprises 325 residues: MQHAQRPTWPHKDLLDVTQLTRAELFHLLDTAAQFHDINRRPVKKVPTLKGKSVVLFFAEPSTRTKTSFDVAGKRLSADTFSLAKSGSSLSKGESLKDTALTLQAMTPDIIVIRHSSSGAAQFLAERLDCSVVNAGDGWHAHPTQALLDCYSLRQVWGDTFEGRTLLILGDIAHSRVARSNVHLLSSLGVKVRLCAPRTLLPAGVHNWPVTIFNRLDDAVQGVDAVMCLRLQLERQQAGLLPDLREYAQRFCLSPRHLTMAAPSARVLHPGPMNRGLEISSVLADAPESLILDQVAAGVATRMAILFLLATRTGIEQTADNGGRA.

Carbamoyl phosphate-binding residues include arginine 64 and threonine 65. Lysine 92 contacts L-aspartate. 3 residues coordinate carbamoyl phosphate: arginine 114, histidine 142, and glutamine 145. Residues arginine 176 and arginine 230 each contribute to the L-aspartate site. Positions 271 and 272 each coordinate carbamoyl phosphate.

The protein belongs to the aspartate/ornithine carbamoyltransferase superfamily. ATCase family. In terms of assembly, heterododecamer (2C3:3R2) of six catalytic PyrB chains organized as two trimers (C3), and six regulatory PyrI chains organized as three dimers (R2).

The enzyme catalyses carbamoyl phosphate + L-aspartate = N-carbamoyl-L-aspartate + phosphate + H(+). Its pathway is pyrimidine metabolism; UMP biosynthesis via de novo pathway; (S)-dihydroorotate from bicarbonate: step 2/3. Functionally, catalyzes the condensation of carbamoyl phosphate and aspartate to form carbamoyl aspartate and inorganic phosphate, the committed step in the de novo pyrimidine nucleotide biosynthesis pathway. The polypeptide is Aspartate carbamoyltransferase catalytic subunit (Nitratidesulfovibrio vulgaris (strain DSM 19637 / Miyazaki F) (Desulfovibrio vulgaris)).